The following is a 137-amino-acid chain: Glutamate mutase sigma subunit (137 aa).

The 135-residue stretch at 3-137 (EVNLVLGVIG…KALKEDLGLM (135 aa)) folds into the B12-binding domain. Residues 13–17 (ADVHA), H16, 61–63 (SSL), and 93–97 (NLVVG) each bind adenosylcob(III)alamin.

This sequence belongs to the methylaspartate mutase GlmS subunit family. Heterotetramer composed of 2 epsilon subunits (GlmE) and 2 sigma subunits (GlmS). GlmE exists as a homodimer and GlmS as a monomer. The cofactor is adenosylcob(III)alamin.

The enzyme catalyses (2S,3S)-3-methyl-L-aspartate = L-glutamate. The protein operates within amino-acid degradation; L-glutamate degradation via mesaconate pathway; acetate and pyruvate from L-glutamate: step 1/4. Functionally, catalyzes the carbon skeleton rearrangement of L-glutamate to L-threo-3-methylaspartate ((2S,3S)-3-methylaspartate). The polypeptide is Glutamate mutase sigma subunit (Carboxydothermus hydrogenoformans (strain ATCC BAA-161 / DSM 6008 / Z-2901)).